The sequence spans 551 residues: Probable 4-coumarate--CoA ligase 2 (551 aa).

Residues Ser205, Ser206, Gly207, Thr208, Thr209, and Lys213 each contribute to the ATP site. (E)-4-coumaroyl-AMP-binding residues include Tyr253 and Thr257. Lys274 is a binding site for CoA. The SBD1 stretch occupies residues 276 to 346 (EFVRFLDLIQ…RFKGKLIIKQ (71 aa)). 4 residues coordinate (E)-4-coumaroyl-AMP: Ala323, Gln346, Gly347, and Thr351. Positions 346, 347, 351, 430, and 445 each coordinate ATP. An SBD2 region spans residues 347–409 (GYGATELSPA…IKGPNVMLGY (63 aa)). Residues Lys447 and Lys451 each coordinate (E)-4-coumaroyl-AMP. The CoA site is built by Lys453 and Gly454. Lys537 lines the ATP pocket.

Belongs to the ATP-dependent AMP-binding enzyme family. It depends on Mg(2+) as a cofactor.

It carries out the reaction (E)-4-coumarate + ATP + CoA = (E)-4-coumaroyl-CoA + AMP + diphosphate. It catalyses the reaction (E)-4-coumarate + ATP + H(+) = (E)-4-coumaroyl-AMP + diphosphate. The enzyme catalyses (E)-4-coumaroyl-AMP + CoA = (E)-4-coumaroyl-CoA + AMP + H(+). It functions in the pathway phytoalexin biosynthesis; 3,4',5-trihydroxystilbene biosynthesis; 3,4',5-trihydroxystilbene from trans-4-coumarate: step 1/2. Its function is as follows. Carboxylate--CoA ligase that may use 4-coumarate as substrate. Follows a two-step reaction mechanism, wherein the carboxylate substrate first undergoes adenylation by ATP, followed by a thioesterification in the presence of CoA to yield the final CoA thioester. The sequence is that of Probable 4-coumarate--CoA ligase 2 (4cl2) from Dictyostelium discoideum (Social amoeba).